Consider the following 101-residue polypeptide: Putative pterin-4-alpha-carbinolamine dehydratase (101 aa).

It belongs to the pterin-4-alpha-carbinolamine dehydratase family.

The enzyme catalyses (4aS,6R)-4a-hydroxy-L-erythro-5,6,7,8-tetrahydrobiopterin = (6R)-L-erythro-6,7-dihydrobiopterin + H2O. This chain is Putative pterin-4-alpha-carbinolamine dehydratase, found in Rhizobium leguminosarum bv. trifolii (strain WSM2304).